The primary structure comprises 436 residues: Ribulose bisphosphate carboxylase large chain (436 aa).

At Lys-4 the chain carries N6,N6,N6-trimethyllysine. Substrate is bound by residues Asn-113 and Thr-163. Lys-165 (proton acceptor) is an active-site residue. Lys-167 provides a ligand contact to substrate. Positions 191, 193, and 194 each coordinate Mg(2+). Lys-191 is modified (N6-carboxylysine). Residue His-284 is the Proton acceptor of the active site. The substrate site is built by Arg-285, His-317, and Ser-369.

This sequence belongs to the RuBisCO large chain family. Type I subfamily. As to quaternary structure, heterohexadecamer of 8 large chains and 8 small chains; disulfide-linked. The disulfide link is formed within the large subunit homodimers. It depends on Mg(2+) as a cofactor. Post-translationally, the disulfide bond which can form in the large chain dimeric partners within the hexadecamer appears to be associated with oxidative stress and protein turnover.

Its subcellular location is the plastid. It localises to the chloroplast. It carries out the reaction 2 (2R)-3-phosphoglycerate + 2 H(+) = D-ribulose 1,5-bisphosphate + CO2 + H2O. It catalyses the reaction D-ribulose 1,5-bisphosphate + O2 = 2-phosphoglycolate + (2R)-3-phosphoglycerate + 2 H(+). RuBisCO catalyzes two reactions: the carboxylation of D-ribulose 1,5-bisphosphate, the primary event in carbon dioxide fixation, as well as the oxidative fragmentation of the pentose substrate in the photorespiration process. Both reactions occur simultaneously and in competition at the same active site. In Sanguinaria canadensis (Bloodroot), this protein is Ribulose bisphosphate carboxylase large chain.